Consider the following 938-residue polypeptide: MTNPKSGVAESAGLACSRAAAGENRMKDSENKGASSPDMEPSYGGGLFDMVKGGAGRLFSNLKDNLKDTLKDTSSRVIQSVSSYTKGDLDFTYVTSRIIVMSFPVDSVDIGFRNQVDDIRSFLDSRHLDHYTVYNLSPKSYRTAKFHSRVSECSWPIRQAPSLHNLFAVCRNMYNWLLQNPKNVCVVHCLDGRAASSILVGAMFIFCNLYSTPGPAVRLLYAKRPGIGLSPSHRRYLGYMCDLLADKPYRPHFKPLTIKAITVSPVPFFNKQRNGCRPYCDVLIGETKIYSTCTDFERMKEYRVQDGKIFIPLNITVQGDVIVSMYHLRSTIGSRLQAKVTNTQIFQLQFHSGFIPLDTTVLKFTKPELDACDVPEKYPQLFQVTLDIEVQPQDKVIDLTPPWEHYCTKDVNPSILFSSQQEHQDTLALGGQAPADLPPDHPRNLGQGGFFASLCWQDQKSEKSRCEEDHAALVNQESEQSDDELLTLSSPHGNAEGDKPHGAKKPGKKQQEPAAPPPPEEVDLLGLEGSDVSTNFSSLAAPPSNSELLSDLFGGVGATGPAQAGQAGVEDVFHPSGPVSAQSTPRRTATSASASPTLRVGEGATFDPFGAPAKPPGQDLLGSFLNTSSASSDPFLQPTRSPSPTVHASSTPAVNIQPDIAGGWDWHTKPGGFGMGSKSAATSPTGSSHGTPTHQSKPQTLDPFADLGTLGSSSFASKPTTPTGLGGGFPPLSSPQKASPQPMGGGWQQPAGYNWQQTQSKPQSSMPHSSPQNRPNYNVSFSAMPAGQSERGKGSTNLEGKQKAADFEDLLSSQGFNAHKDKKGPRTIAEMRKEEMAKEMDPEKLKILEWIEGKERNIRALLSTMHTVLWAGETKWKPVGMADLVTPEQVKKVYRRAVLVVHPDKATGQPYEQYAKMIFMELNDAWSEFENQGQKPLY.

Positions 19 to 41 (AAAGENRMKDSENKGASSPDMEP) are disordered. 3 tandem repeats follow at residues 61–64 (NLKD), 65–68 (NLKD), and 69–72 (TLKD). A 3 X 4 AA approximate tandem repeats region spans residues 61–72 (NLKDNLKDTLKD). Positions 80 to 247 (SVSSYTKGDL…GYMCDLLADK (168 aa)) constitute a Phosphatase tensin-type domain. A Phosphoserine modification is found at S137. C189 serves as the catalytic Phosphocysteine intermediate. One can recognise a C2 tensin-type domain in the interval 253–391 (FKPLTIKAIT…FQVTLDIEVQ (139 aa)). Residues 434-442 (PADLPPDHP) carry the SH3-binding motif. Residues 467–801 (EEDHAALVNQ…GKGSTNLEGK (335 aa)) are disordered. S478 and S481 each carry phosphoserine. A compositionally biased stretch (polar residues) spans 531–548 (DVSTNFSSLAAPPSNSEL). A compositionally biased stretch (low complexity) spans 559 to 569 (TGPAQAGQAGV). 2 stretches are compositionally biased toward polar residues: residues 579–596 (VSAQ…SASP) and 624–654 (FLNT…TPAV). S595 is modified (phosphoserine). The span at 679–694 (SAATSPTGSSHGTPTH) shows a compositional bias: low complexity. The segment covering 754-781 (NWQQTQSKPQSSMPHSSPQNRPNYNVSF) has biased composition (polar residues). Positions 874-938 (TKWKPVGMAD…FENQGQKPLY (65 aa)) constitute a J domain.

As to quaternary structure, forms a complex composed of HSPA8, CLTC and DNAJC6. Interacts with HSPA8/HSC70 in an ATP-dependent manner; this interaction stimulates the HSPA8's ATPase activity. Interacts with CLTC; this interaction produces a local change in heavy-chain contacts, creating a detectable global distortion of the clathrin coat. Interacts with AP2A2. Interacts with DNM1(GTP-bound form); this interaction allows clathrin-coated vesicle (CCV) formation at the plasma membrane. The N-terminus is blocked. In terms of processing, phosphorylation at Ser-595 modulates its ability to bind CLTC and therefore the synaptic vesicle endocytosis (SVE).

The protein localises to the cytoplasmic vesicle. The protein resides in the clathrin-coated vesicle. May act as a protein phosphatase and/or a lipid phosphatase. Co-chaperone that recruits HSPA8/HSC70 to clathrin-coated vesicles (CCVs) and promotes the ATP-dependent dissociation of clathrin from CCVs and participates in clathrin-mediated endocytosis of synaptic vesicles and their recycling and also in intracellular trafficking. Firstly, binds tightly to the clathrin cages, at a ratio of one DNAJC6 per clathrin triskelion. The HSPA8:ATP complex then binds to the clathrin-auxilin cage, initially at a ratio of one HSPA8 per triskelion leading to ATP hydrolysis stimulation and causing a conformational change in the HSPA8. This cycle is repeated three times to drive to a complex containing the clathrin-auxilin cage associated to three HSPA8:ADP complex. The ATP hydrolysis of the third HSPA8:ATP complex leads to a concerted dismantling of the cage into component triskelia. Then, dissociates from the released triskelia and be recycled to initiate another cycle of HSPA8's recruitment. Also acts during the early steps of clathrin-coated vesicle (CCV) formation through its interaction with the GTP bound form of DNM1. This Mus musculus (Mouse) protein is Auxilin.